Consider the following 451-residue polypeptide: Tubulin beta chain (451 aa).

GTP-binding residues include glutamine 11, glutamate 69, serine 138, glycine 142, threonine 143, glycine 144, asparagine 204, and asparagine 226. Residue glutamate 69 participates in Mg(2+) binding. Positions 426 to 451 are disordered; it reads QDATAEEEGEFDENEGAEGEEQPADY. Residues 429–451 are compositionally biased toward acidic residues; sequence TAEEEGEFDENEGAEGEEQPADY.

It belongs to the tubulin family. In terms of assembly, dimer of alpha and beta chains. A typical microtubule is a hollow water-filled tube with an outer diameter of 25 nm and an inner diameter of 15 nM. Alpha-beta heterodimers associate head-to-tail to form protofilaments running lengthwise along the microtubule wall with the beta-tubulin subunit facing the microtubule plus end conferring a structural polarity. Microtubules usually have 13 protofilaments but different protofilament numbers can be found in some organisms and specialized cells. Mg(2+) is required as a cofactor.

The protein resides in the cytoplasm. It localises to the cytoskeleton. Its function is as follows. Tubulin is the major constituent of microtubules, a cylinder consisting of laterally associated linear protofilaments composed of alpha- and beta-tubulin heterodimers. Microtubules grow by the addition of GTP-tubulin dimers to the microtubule end, where a stabilizing cap forms. Below the cap, tubulin dimers are in GDP-bound state, owing to GTPase activity of alpha-tubulin. The chain is Tubulin beta chain from Naegleria pringsheimi (Amoeba).